Consider the following 142-residue polypeptide: ATP synthase epsilon chain (142 aa).

Belongs to the ATPase epsilon chain family. In terms of assembly, F-type ATPases have 2 components, CF(1) - the catalytic core - and CF(0) - the membrane proton channel. CF(1) has five subunits: alpha(3), beta(3), gamma(1), delta(1), epsilon(1). CF(0) has three main subunits: a, b and c.

The protein resides in the cell inner membrane. Its function is as follows. Produces ATP from ADP in the presence of a proton gradient across the membrane. The sequence is that of ATP synthase epsilon chain from Shewanella woodyi (strain ATCC 51908 / MS32).